The primary structure comprises 73 residues: UPF0235 protein PERMA_1406 (73 aa).

The protein belongs to the UPF0235 family.

The chain is UPF0235 protein PERMA_1406 from Persephonella marina (strain DSM 14350 / EX-H1).